We begin with the raw amino-acid sequence, 313 residues long: Porphobilinogen deaminase (313 aa).

Cys-242 bears the S-(dipyrrolylmethanemethyl)cysteine mark.

The protein belongs to the HMBS family. As to quaternary structure, monomer. Requires dipyrromethane as cofactor.

The enzyme catalyses 4 porphobilinogen + H2O = hydroxymethylbilane + 4 NH4(+). It functions in the pathway porphyrin-containing compound metabolism; protoporphyrin-IX biosynthesis; coproporphyrinogen-III from 5-aminolevulinate: step 2/4. In terms of biological role, tetrapolymerization of the monopyrrole PBG into the hydroxymethylbilane pre-uroporphyrinogen in several discrete steps. The chain is Porphobilinogen deaminase from Pseudomonas aeruginosa (strain UCBPP-PA14).